The sequence spans 380 residues: Epoxyqueuosine reductase (380 aa).

Asp-134 serves as the catalytic Proton donor. The 4Fe-4S ferredoxin-type 1 domain occupies 179–208; sequence PPDQPIEDQCGSCTKCIDICPTGALIQGGQ. [4Fe-4S] cluster is bound by residues Cys-188, Cys-191, Cys-194, Cys-198, Cys-214, Cys-240, Cys-243, and Cys-247. The 33-residue stretch at 226–258 folds into the 4Fe-4S ferredoxin-type 2 domain; sequence PEEYRDKIGNRIYGCDTCQTVCPKNKGMDFHNH.

The protein belongs to the QueG family. In terms of assembly, monomer. Requires cob(II)alamin as cofactor. It depends on [4Fe-4S] cluster as a cofactor.

Its subcellular location is the cytoplasm. The enzyme catalyses epoxyqueuosine(34) in tRNA + AH2 = queuosine(34) in tRNA + A + H2O. Its pathway is tRNA modification; tRNA-queuosine biosynthesis. Its function is as follows. Catalyzes the conversion of epoxyqueuosine (oQ) to queuosine (Q), which is a hypermodified base found in the wobble positions of tRNA(Asp), tRNA(Asn), tRNA(His) and tRNA(Tyr). The protein is Epoxyqueuosine reductase of Bacillus anthracis.